The following is a 926-amino-acid chain: Beta-mannosidase A (926 aa).

The N-terminal stretch at 1 to 21 (MHVKAETVLALLTPAPPSVVG) is a signal peptide. Residues N40, N242, N277, N311, and N342 are each glycosylated (N-linked (GlcNAc...) asparagine). E474 serves as the catalytic Proton donor. N-linked (GlcNAc...) asparagine glycosylation is found at N532, N603, N626, N653, N733, N756, N785, N793, N819, and N905.

It belongs to the glycosyl hydrolase 2 family. Beta-mannosidase A subfamily. In terms of assembly, homodimer.

Its subcellular location is the secreted. The catalysed reaction is Hydrolysis of terminal, non-reducing beta-D-mannose residues in beta-D-mannosides.. Its pathway is glycan metabolism; N-glycan degradation. Its function is as follows. Exoglycosidase that cleaves the single beta-linked mannose residue from the non-reducing end of beta-mannosidic oligosaccharides of various complexity and length. Involved in the degradation of polymeric mannan and galactomannan. The polypeptide is Beta-mannosidase A (mndA) (Aspergillus fumigatus (strain ATCC MYA-4609 / CBS 101355 / FGSC A1100 / Af293) (Neosartorya fumigata)).